Here is a 691-residue protein sequence, read N- to C-terminus: POU domain, class 6, transcription factor 2 (691 aa).

3 disordered regions span residues 1–61 (MIAG…RGNT), 188–297 (QQQQ…LQLV), and 435–461 (GQAATSHSPVRQASSSSSSSSSSSALS). The span at 17 to 28 (MNAELRGEDKAA) shows a compositional bias: basic and acidic residues. 2 stretches are compositionally biased toward low complexity: residues 188–197 (QQQQQQQQQQ) and 206–216 (QHPQPASQAPP). The segment covering 217–237 (QSQPTPPHQPPPASQQLPAPP) has biased composition (pro residues). Over residues 238–272 (AQLEQATQPQQHQPHSHPQNQTQNQPSPTQQSSSP) the composition is skewed to low complexity. Residues 437-447 (AATSHSPVRQA) are compositionally biased toward polar residues. Positions 448–458 (SSSSSSSSSSS) are enriched in low complexity. The region spanning 476 to 586 (VDGVNLEEIR…VLERWMAEAE (111 aa)) is the POU-specific domain. The homeobox DNA-binding region spans 607 to 666 (KRKRRTSFTPQALEILNAHFEKNTHPSGQEMTEIAEKLNYDREVVRVWFCNKRQALKNTI). The tract at residues 670–691 (KQHEPTSAAPLEPLADSPEENC) is disordered.

Belongs to the POU transcription factor family. Class-6 subfamily. Expressed in kidney, heart, muscle, spleen and ovary, but not in lung.

The protein resides in the nucleus. Functionally, probable transcription factor likely to be involved in early steps in the differentiation of amacrine and ganglion cells. Recognizes and binds to the DNA sequence 5'-ATGCAAAT-3'. The protein is POU domain, class 6, transcription factor 2 (Pou6f2) of Mus musculus (Mouse).